The sequence spans 369 residues: Putative 2-aminoethylphosphonate import ATP-binding protein PhnT (369 aa).

The ABC transporter domain occupies 19-250; it reads IVLDSLRVAY…PPNRFAAEFL (232 aa). Residue 51-58 participates in ATP binding; that stretch reads GPSGSGKT.

It belongs to the ABC transporter superfamily. 2-aminoethylphosphonate importer (TC 3.A.1.11.5) family.

It is found in the cell inner membrane. In terms of biological role, probably part of the PhnSTUV complex (TC 3.A.1.11.5) involved in 2-aminoethylphosphonate import. Probably responsible for energy coupling to the transport system. In Salmonella typhimurium (strain LT2 / SGSC1412 / ATCC 700720), this protein is Putative 2-aminoethylphosphonate import ATP-binding protein PhnT (phnT).